The sequence spans 196 residues: uncharacterized protein (196 aa).

The Bro-N domain occupies 58 to 163; that stretch reads HKFFDAIKDS…IILPNNYHKN (106 aa).

This is an uncharacterized protein from Acanthamoeba polyphaga mimivirus (APMV).